Here is a 330-residue protein sequence, read N- to C-terminus: Inactive hydroxysteroid dehydrogenase-like protein 1 (330 aa).

The residue at position 2 (A2) is an N-acetylalanine. The segment at A2–A82 is required for mitochondria translocation. Residues G74 to G80, D125, and K222 contribute to the NADP(+) site.

The protein belongs to the short-chain dehydrogenases/reductases (SDR) family. 17-beta-HSD 3 subfamily. Interacts with STYXL1.

Its subcellular location is the mitochondrion. The protein is Inactive hydroxysteroid dehydrogenase-like protein 1 (HSDL1) of Pongo abelii (Sumatran orangutan).